Consider the following 97-residue polypeptide: Protein S100-A10 (97 aa).

Residues Lys23 and Lys28 each carry the N6-acetyllysine modification. Lys37 carries the post-translational modification N6-acetyllysine; alternate. Residue Lys37 forms a Glycyl lysine isopeptide (Lys-Gly) (interchain with G-Cter in SUMO2); alternate linkage. N6-acetyllysine occurs at positions 54 and 57. Residues 60–71 (DQCRDGKVGFQS) form an ancestral calcium site region.

This sequence belongs to the S-100 family. As to quaternary structure, heterotetramer containing 2 light chains of S100A10/p11 and 2 heavy chains of ANXA2/p36. Interacts with SCN10A. Interacts with TASOR.

Its function is as follows. Because S100A10 induces the dimerization of ANXA2/p36, it may function as a regulator of protein phosphorylation in that the ANXA2 monomer is the preferred target (in vitro) of tyrosine-specific kinase. The polypeptide is Protein S100-A10 (S100A10) (Bos taurus (Bovine)).